Consider the following 341-residue polypeptide: S-adenosylmethionine:tRNA ribosyltransferase-isomerase (341 aa).

This sequence belongs to the QueA family. As to quaternary structure, monomer.

The protein resides in the cytoplasm. It catalyses the reaction 7-aminomethyl-7-carbaguanosine(34) in tRNA + S-adenosyl-L-methionine = epoxyqueuosine(34) in tRNA + adenine + L-methionine + 2 H(+). The protein operates within tRNA modification; tRNA-queuosine biosynthesis. Its function is as follows. Transfers and isomerizes the ribose moiety from AdoMet to the 7-aminomethyl group of 7-deazaguanine (preQ1-tRNA) to give epoxyqueuosine (oQ-tRNA). The protein is S-adenosylmethionine:tRNA ribosyltransferase-isomerase of Clostridium perfringens (strain SM101 / Type A).